The primary structure comprises 376 residues: Calcium uniporter protein, mitochondrial (376 aa).

The N-terminal 34 residues, 1–34, are a transit peptide targeting the mitochondrion; it reads MAAKVCRSVLLLSRSSGAVASSAYPAFGVSSQRH. Residues 35-257 lie on the Mitochondrial matrix side of the membrane; it reads QGTKTEALSM…LSKKAERRTT (223 aa). Residues 99-189 form an N-terminal MCU domain region; that stretch reads VSVVYQNGLP…TSYLVQPPRR (91 aa). Positions 213-254 form a coiled coil; that stretch reads TLRIEEHQLNKERELIGRLEDLNSQLQPLEKVKEELSKKAER. A helical transmembrane segment spans residues 258 to 280; it reads WVLWGGMAYMATQFGILARLTWW. The Mitochondrial intermembrane segment spans residues 281–289; the sequence is EYSWDIMEP. The Selectivity filter signature appears at 284–292; that stretch reads WDIMEPVTY. Residue glutamate 288 participates in Ca(2+) binding. The chain crosses the membrane as a helical span at residues 290–309; it reads VTYFITYGTAMAMYAYFVLT. The segment at 309–314 is juxtamembrane helix; sequence TRQEYL. At 310-376 the chain is on the mitochondrial matrix side; the sequence is RQEYLYPDAR…PIQQIDTSKD (67 aa). The stretch at 336-363 forms a coiled coil; the sequence is FDIEKYNKLKDAIAEAELDLKRLRDPLQ.

The protein belongs to the MCU (TC 1.A.77) family. As to quaternary structure, homotetramer. Component of the uniplex complex.

It localises to the mitochondrion inner membrane. The catalysed reaction is Ca(2+)(in) = Ca(2+)(out). MCU channel activity is regulated by the heterodimer composed of micu1 and micu2, which act as calcium-sensors. At low calcium levels, micu1 occludes the pore of the MCU channel, preventing mitochondrial calcium uptake. At higher calcium levels, calcium-binding to micu1 and micu2 induces a conformational change that weakens mcu-micu1 interactions and moves the micu1-micu2 heterodimer away from the pore, allowing calcium permeation through the channel. MCU channel activity is gated by emre/smdt1 via the juxtamembrane helix loop. Inhibited by ruthenium red or its derivative Ru360. In terms of biological role, channel-forming and calcium-conducting subunit of the mitochondrial inner membrane calcium uniporter complex (uniplex), which mediates calcium uptake into the mitochondrial matrix. Mcu channel activity is regulated by the calcium-sensor subunits of the uniplex micu1 and micu2. Mitochondrial calcium homeostasis plays key roles in cellular physiology and regulates ATP production, cytoplasmic calcium signals and activation of cell death pathways. Involved in buffering the amplitude of systolic calcium rises in cardiomyocytes. While dispensable for baseline homeostatic cardiac function, acts as a key regulator of short-term mitochondrial calcium loading underlying a 'fight-or-flight' response during acute stress: acts by mediating a rapid increase of mitochondrial calcium in pacemaker cells. Mitochondrial calcium uptake in skeletal muscle cells is involved in muscle size in adults. In Danio rerio (Zebrafish), this protein is Calcium uniporter protein, mitochondrial.